A 529-amino-acid polypeptide reads, in one-letter code: Bifunctional purine biosynthesis protein PurH (529 aa).

The region spanning 1–148 (MQQPRPIRRA…KNHKDVAIVV (148 aa)) is the MGS-like domain.

This sequence belongs to the PurH family.

The catalysed reaction is (6R)-10-formyltetrahydrofolate + 5-amino-1-(5-phospho-beta-D-ribosyl)imidazole-4-carboxamide = 5-formamido-1-(5-phospho-D-ribosyl)imidazole-4-carboxamide + (6S)-5,6,7,8-tetrahydrofolate. It catalyses the reaction IMP + H2O = 5-formamido-1-(5-phospho-D-ribosyl)imidazole-4-carboxamide. Its pathway is purine metabolism; IMP biosynthesis via de novo pathway; 5-formamido-1-(5-phospho-D-ribosyl)imidazole-4-carboxamide from 5-amino-1-(5-phospho-D-ribosyl)imidazole-4-carboxamide (10-formyl THF route): step 1/1. It functions in the pathway purine metabolism; IMP biosynthesis via de novo pathway; IMP from 5-formamido-1-(5-phospho-D-ribosyl)imidazole-4-carboxamide: step 1/1. The chain is Bifunctional purine biosynthesis protein PurH from Serratia proteamaculans (strain 568).